We begin with the raw amino-acid sequence, 558 residues long: Potassium-transporting ATPase potassium-binding subunit (558 aa).

12 helical membrane passes run 1–21 (MEII…SGYL), 66–86 (FNGF…WLFL), 127–147 (MIVM…VCIA), 166–186 (IVRF…ILLM), 245–265 (IWSD…MLFL), 281–301 (ALIL…LTMW), 327–347 (FGAG…TGSV), 354–374 (LTPL…VFGG), 377–397 (VGLM…SLMV), 416–436 (IVLV…LAFM), 482–502 (ISTG…QLLI), and 531–551 (IVFI…LGPI).

This sequence belongs to the KdpA family. In terms of assembly, the system is composed of three essential subunits: KdpA, KdpB and KdpC.

The protein resides in the cell membrane. Functionally, part of the high-affinity ATP-driven potassium transport (or Kdp) system, which catalyzes the hydrolysis of ATP coupled with the electrogenic transport of potassium into the cytoplasm. This subunit binds the extracellular potassium ions and delivers the ions to the membrane domain of KdpB through an intramembrane tunnel. This Staphylococcus aureus (strain bovine RF122 / ET3-1) protein is Potassium-transporting ATPase potassium-binding subunit.